We begin with the raw amino-acid sequence, 459 residues long: tRNA modification GTPase MnmE (459 aa).

The (6S)-5-formyl-5,6,7,8-tetrahydrofolate site is built by Arg-29, Glu-91, and Arg-130. The TrmE-type G domain maps to 225–381 (GVKVAIVGRP…LEEALEQLVT (157 aa)). Asn-235 contacts K(+). GTP is bound by residues 235 to 240 (NVGKSS), 254 to 260 (TDLPGTT), and 279 to 282 (DTAG). Position 239 (Ser-239) interacts with Mg(2+). Thr-254, Leu-256, and Thr-259 together coordinate K(+). Thr-260 contacts Mg(2+). Lys-459 serves as a coordination point for (6S)-5-formyl-5,6,7,8-tetrahydrofolate.

It belongs to the TRAFAC class TrmE-Era-EngA-EngB-Septin-like GTPase superfamily. TrmE GTPase family. Homodimer. Heterotetramer of two MnmE and two MnmG subunits. The cofactor is K(+).

It localises to the cytoplasm. Functionally, exhibits a very high intrinsic GTPase hydrolysis rate. Involved in the addition of a carboxymethylaminomethyl (cmnm) group at the wobble position (U34) of certain tRNAs, forming tRNA-cmnm(5)s(2)U34. This chain is tRNA modification GTPase MnmE, found in Synechococcus sp. (strain JA-3-3Ab) (Cyanobacteria bacterium Yellowstone A-Prime).